We begin with the raw amino-acid sequence, 168 residues long: SPbeta prophage-derived uncharacterized protein YomW (168 aa).

The protein is SPbeta prophage-derived uncharacterized protein YomW (yomW) of Bacillus subtilis (strain 168).